A 346-amino-acid chain; its full sequence is Ion-translocating oxidoreductase complex subunit D (346 aa).

A run of 4 helical transmembrane segments spans residues 20–40 (IMIQ…TFFG), 42–62 (GIII…GVVL), 69–91 (LASR…SLPP), and 120–140 (PFNP…VQMT). Threonine 187 carries the post-translational modification FMN phosphoryl threonine. Transmembrane regions (helical) follow at residues 212-232 (ASAG…YLIW), 242-262 (LSLL…APVV), 264-284 (APPL…FIAT), 290-310 (AATV…VWLI), and 314-334 (GGYP…VPLI).

Belongs to the NqrB/RnfD family. As to quaternary structure, the complex is composed of six subunits: RnfA, RnfB, RnfC, RnfD, RnfE and RnfG. FMN is required as a cofactor.

The protein localises to the cell inner membrane. Its function is as follows. Part of a membrane-bound complex that couples electron transfer with translocation of ions across the membrane. The sequence is that of Ion-translocating oxidoreductase complex subunit D from Sodalis glossinidius (strain morsitans).